A 305-amino-acid polypeptide reads, in one-letter code: UDP-3-O-acyl-N-acetylglucosamine deacetylase (305 aa).

Residues His79, His238, and Asp242 each coordinate Zn(2+). His265 (proton donor) is an active-site residue.

Belongs to the LpxC family. The cofactor is Zn(2+).

It carries out the reaction a UDP-3-O-[(3R)-3-hydroxyacyl]-N-acetyl-alpha-D-glucosamine + H2O = a UDP-3-O-[(3R)-3-hydroxyacyl]-alpha-D-glucosamine + acetate. The protein operates within glycolipid biosynthesis; lipid IV(A) biosynthesis; lipid IV(A) from (3R)-3-hydroxytetradecanoyl-[acyl-carrier-protein] and UDP-N-acetyl-alpha-D-glucosamine: step 2/6. Functionally, catalyzes the hydrolysis of UDP-3-O-myristoyl-N-acetylglucosamine to form UDP-3-O-myristoylglucosamine and acetate, the committed step in lipid A biosynthesis. In Mannheimia succiniciproducens (strain KCTC 0769BP / MBEL55E), this protein is UDP-3-O-acyl-N-acetylglucosamine deacetylase.